The following is a 66-amino-acid chain: Prophage transcriptional regulatory protein (66 aa).

The chain is Prophage transcriptional regulatory protein (croE) from Escherichia coli (strain K12).